The primary structure comprises 486 residues: Katanin p60 ATPase-containing subunit A1 (486 aa).

Positions 103–174 (RSSPLPVRRP…NKAEVSEKEV (72 aa)) are disordered. A compositionally biased stretch (basic and acidic residues) spans 143–174 (NGDRAKPLKGKEKKEAKPKDDKNKAEVSEKEV). Residue 244 to 251 (GPPGTGKT) participates in ATP binding.

It belongs to the AAA ATPase family. Katanin p60 subunit A1 subfamily. Can homooligomerize into hexameric rings, which may be promoted by interaction with microtubules. Interacts with katnb1, which may serve as a targeting subunit.

The protein localises to the cytoplasm. Its subcellular location is the cytoskeleton. The protein resides in the microtubule organizing center. It is found in the centrosome. It localises to the spindle pole. The protein localises to the spindle. The enzyme catalyses n ATP + n H2O + a microtubule = n ADP + n phosphate + (n+1) alpha/beta tubulin heterodimers.. With respect to regulation, ATPase activity is stimulated by microtubules, which promote homooligomerization. ATP-dependent microtubule severing is stimulated by interaction with katnb1. In terms of biological role, catalytic subunit of a complex which severs microtubules in an ATP-dependent manner. Microtubule severing may promote rapid reorganization of cellular microtubule arrays and the release of microtubules from the centrosome following nucleation. The sequence is that of Katanin p60 ATPase-containing subunit A1 (katna1) from Salmo salar (Atlantic salmon).